The following is a 291-amino-acid chain: Acetyl-coenzyme A carboxylase carboxyl transferase subunit beta (291 aa).

In terms of domain architecture, CoA carboxyltransferase N-terminal spans 29-291 (IMTKCPDCKK…TGGDLEWLEN (263 aa)). Residues cysteine 33, cysteine 36, cysteine 52, and cysteine 55 each contribute to the Zn(2+) site. The C4-type zinc-finger motif lies at 33-55 (CPDCKKIMLTKELDKNLRVCMNC).

This sequence belongs to the AccD/PCCB family. Acetyl-CoA carboxylase is a heterohexamer composed of biotin carboxyl carrier protein (AccB), biotin carboxylase (AccC) and two subunits each of ACCase subunit alpha (AccA) and ACCase subunit beta (AccD). Zn(2+) is required as a cofactor.

The protein localises to the cytoplasm. It carries out the reaction N(6)-carboxybiotinyl-L-lysyl-[protein] + acetyl-CoA = N(6)-biotinyl-L-lysyl-[protein] + malonyl-CoA. It functions in the pathway lipid metabolism; malonyl-CoA biosynthesis; malonyl-CoA from acetyl-CoA: step 1/1. Component of the acetyl coenzyme A carboxylase (ACC) complex. Biotin carboxylase (BC) catalyzes the carboxylation of biotin on its carrier protein (BCCP) and then the CO(2) group is transferred by the transcarboxylase to acetyl-CoA to form malonyl-CoA. The polypeptide is Acetyl-coenzyme A carboxylase carboxyl transferase subunit beta (Bacillus licheniformis (strain ATCC 14580 / DSM 13 / JCM 2505 / CCUG 7422 / NBRC 12200 / NCIMB 9375 / NCTC 10341 / NRRL NRS-1264 / Gibson 46)).